A 603-amino-acid polypeptide reads, in one-letter code: Serine/threonine-protein kinase HAL4/SAT4 (603 aa).

Polar residues-rich tracts occupy residues 1-15 (MTGMNDNNAAIPQQT), 30-60 (RSGSRSSRQGKASSNIQPPSNINTNVPSASK), and 68-85 (TPTTATPRVVSNPSNTAG). Disordered regions lie at residues 1–86 (MTGM…TAGV), 150–171 (LSPKFSHHSNSNTAITPAPTPT), and 267–301 (DKYPEGAPTSGALNCPERDIYRSDQKDSKNNTHNI). Over residues 159–171 (NSNTAITPAPTPT) the composition is skewed to low complexity. Positions 282 to 296 (PERDIYRSDQKDSKN) are enriched in basic and acidic residues. Residues 316-590 (GRCQEVLGKG…GKQILNSEWG (275 aa)) enclose the Protein kinase domain. ATP is bound by residues 322-330 (LGKGAFGVV) and Lys353. Asp449 functions as the Proton acceptor in the catalytic mechanism.

This sequence belongs to the protein kinase superfamily. Ser/Thr protein kinase family.

It carries out the reaction L-seryl-[protein] + ATP = O-phospho-L-seryl-[protein] + ADP + H(+). The catalysed reaction is L-threonyl-[protein] + ATP = O-phospho-L-threonyl-[protein] + ADP + H(+). Promotes K(+) uptake, by the potassium transporter TRK1-TRK2, which leads to the subsequent cellular resistance to toxic cations such as Na(+), Li(+) and Ca(2+). This is Serine/threonine-protein kinase HAL4/SAT4 (SAT4) from Saccharomyces cerevisiae (strain ATCC 204508 / S288c) (Baker's yeast).